The sequence spans 359 residues: Type II methyltransferase M.HinfI (359 aa).

In terms of domain architecture, RAMA spans 275–358 (KVPMKTLIEA…LDSLRYEYTN (84 aa)).

This sequence belongs to the N(4)/N(6)-methyltransferase family.

The enzyme catalyses a 2'-deoxyadenosine in DNA + S-adenosyl-L-methionine = an N(6)-methyl-2'-deoxyadenosine in DNA + S-adenosyl-L-homocysteine + H(+). Functionally, a beta subtype methylase that recognizes the double-stranded sequence 5'-GANTC-3', methylates A-2 on both strands, and protects the DNA from cleavage by the HinfI endonuclease. The chain is Type II methyltransferase M.HinfI (hinfIM) from Haemophilus influenzae.